A 959-amino-acid chain; its full sequence is Bifunctional premutilin synthase (959 aa).

A class II diterpene cyclase region spans residues 1–542 (MGLSEDLHAR…ALNVPIPRFD (542 aa)). The DXDD motif signature appears at 309–312 (DADM). The active-site For class II diterpene cyclase activity is the Asp-311. Residues 543-959 (PSSISTLPAI…TANGSNGIHH (417 aa)) form a class I diterpene synthase region. The active-site For class I diterpene synthase activity is Asp-649. Mg(2+)-binding residues include Asp-649, Asp-653, and Asn-824. Residues 649–653 (DDYLD) carry the DDXXD motif motif. Residues 931–959 (KGTNGVKKINGSSTNGTKVTANGSNGIHH) form a disordered region. The segment covering 940–959 (NGSSTNGTKVTANGSNGIHH) has biased composition (polar residues).

It belongs to the terpene synthase family. The cofactor is Mg(2+).

It functions in the pathway secondary metabolite biosynthesis; terpenoid biosynthesis. In terms of biological role, bifunctional premutilin synthase; part of the gene cluster that mediates the biosynthesis of pleuromutilin, a tricyclic diterpene showing antibacterial properties. The geranylgeranyl diphosphate (GGPP) synthase catalyzes the first step in pleuromutilin biosynthesis. GGPP is then substrate of the premutilin synthase (PS) to yield premutilin. Premutilin synthase is a bifunctional enzyme composed of the fusion of a class II diterpene cyclase (DTC) and a class I diterpene synthase (DTS), with the corresponding domains and active sites containing characteristic aspartate-rich motifs. GGPP is first converted to mutildienyl-diphosphate (MPP) at the class II DTC site. MPP is subsequently further cyclized at the class I DTS site, followed by a 1,5-hydride shift and addition of water prior to terminating deprotonation, to yield premutilin. In addition to the aforementioned GGPP synthase and bifunctional diterpene synthase, the cluster also contains three cytochrome P450 monooxygenases, a short-chain alcohol dehydrogenase, and an acyltransferase, involved in the conversion of premutilin to pleuromutilin. The cytochrome P450 monooxygenases P450-1 and P450-2 hydroxylate premutilin at C-11 and C-3, respectively, producing 11-hydroxypremutilin and 3-hydroxypremutilin. The combination of the actions of both ple5 and ple6 leads to the production of 3,11-dihydroxypremutilin. The short chain dehydrogenase SDR further converts 3,11-dihydroxypremutilin into mutilin. The acetyltransferase ATF then acetylates mutilin to produce 14-O-acetylmutilin. Finally, the cytochrome P450 monooxygenase P450-3 catalyzes hydroxylation on the alpha position of the acetyl side chain of 14-O-acetylmutilin to yield pleuromutilin. The chain is Bifunctional premutilin synthase from Clitopilus passeckerianus (Pleurotus passeckerianus).